A 397-amino-acid chain; its full sequence is 1-deoxy-D-xylulose 5-phosphate reductoisomerase (397 aa).

Threonine 17, glycine 18, serine 19, isoleucine 20, alanine 45, asparagine 47, and asparagine 130 together coordinate NADPH. Lysine 131 is a 1-deoxy-D-xylulose 5-phosphate binding site. An NADPH-binding site is contributed by glutamate 132. Aspartate 156 serves as a coordination point for Mn(2+). Residues serine 157, glutamate 158, serine 182, and histidine 205 each coordinate 1-deoxy-D-xylulose 5-phosphate. Glutamate 158 is a binding site for Mn(2+). Glycine 211 lines the NADPH pocket. 1-deoxy-D-xylulose 5-phosphate contacts are provided by serine 218, asparagine 223, lysine 224, and glutamate 227. Residue glutamate 227 participates in Mn(2+) binding.

It belongs to the DXR family. Mg(2+) is required as a cofactor. Mn(2+) serves as cofactor.

It carries out the reaction 2-C-methyl-D-erythritol 4-phosphate + NADP(+) = 1-deoxy-D-xylulose 5-phosphate + NADPH + H(+). It functions in the pathway isoprenoid biosynthesis; isopentenyl diphosphate biosynthesis via DXP pathway; isopentenyl diphosphate from 1-deoxy-D-xylulose 5-phosphate: step 1/6. In terms of biological role, catalyzes the NADPH-dependent rearrangement and reduction of 1-deoxy-D-xylulose-5-phosphate (DXP) to 2-C-methyl-D-erythritol 4-phosphate (MEP). The sequence is that of 1-deoxy-D-xylulose 5-phosphate reductoisomerase from Agrobacterium fabrum (strain C58 / ATCC 33970) (Agrobacterium tumefaciens (strain C58)).